Consider the following 289-residue polypeptide: MILLQHAVLPPPKQPSPSPPMSVATRSTGTLQLPPQKPFGQEASLPLAGEEELSKGGEQDCALEELCKPLYCKLCNVTLNSAQQAQAHYQGKNHGKKLRNYYAANSCPPPARMSNVVEPAATPVVPVPPQMGSFKPGGRVILATENDYCKLCDASFSSPAVAQAHYQGKNHAKRLRLAEAQSNSFSESSELGQRRARKEGNEFKMMPNRRNMYTVQNNSAGPYFNPRSRQRIPRDLAMCVTPSGQFYCSMCNVGAGEEMEFRQHLESKQHKSKVSEQRYRNEMENLGYV.

Residues 1–42 are disordered; sequence MILLQHAVLPPPKQPSPSPPMSVATRSTGTLQLPPQKPFGQE. Positions 9 to 20 are enriched in pro residues; it reads LPPPKQPSPSPP. The segment covering 24 to 33 has biased composition (polar residues); it reads ATRSTGTLQL. 2 consecutive Matrin-type zinc fingers follow at residues 70 to 100 and 147 to 177; these read LYCKLCNVTLNSAQQAQAHYQGKNHGKKLRN and DYCKLCDASFSSPAVAQAHYQGKNHAKRLRL. A compositionally biased stretch (polar residues) spans 180-191; sequence AQSNSFSESSEL. Positions 180–201 are disordered; the sequence is AQSNSFSESSELGQRRARKEGN. A Matrin-type 3 zinc finger spans residues 246–276; that stretch reads FYCSMCNVGAGEEMEFRQHLESKQHKSKVSE.

In terms of assembly, interacts with dsRNA. Highly expressed in adult brain, and moderately in adult kidney and testis. Not detected in fetal brain, heart, pancreas, adrenal gland, liver or small intestine.

The protein localises to the nucleus. Its subcellular location is the nucleolus. In terms of biological role, acts as a bona fide target gene of p53/TP53. May play a role in the TP53-dependent growth regulatory pathway. May contribute to TP53-mediated apoptosis by regulation of TP53 expression and translocation to the nucleus and nucleolus. The protein is Zinc finger matrin-type protein 3 of Homo sapiens (Human).